Consider the following 211-residue polypeptide: Ribonuclease HII (211 aa).

Residues A16–V205 enclose the RNase H type-2 domain. The a divalent metal cation site is built by D22, E23, and D114.

The protein belongs to the RNase HII family. The cofactor is Mn(2+). Mg(2+) serves as cofactor.

The protein resides in the cytoplasm. The catalysed reaction is Endonucleolytic cleavage to 5'-phosphomonoester.. Endonuclease that specifically degrades the RNA of RNA-DNA hybrids. This chain is Ribonuclease HII (rnhB), found in Caulobacter vibrioides (strain ATCC 19089 / CIP 103742 / CB 15) (Caulobacter crescentus).